Reading from the N-terminus, the 70-residue chain is MIVPLLYLALAGAYLLVVPVALMFYLKQRWYVVSSVERTFMYFLVFLFFPGLLVLSPFVNLRPRPRKIEV.

A run of 2 helical transmembrane segments spans residues 2–22 (IVPL…PVAL) and 39–59 (TFMY…SPFV).

This sequence belongs to the complex I NdhL subunit family. NDH-1 can be composed of about 15 different subunits; different subcomplexes with different compositions have been identified which probably have different functions.

The protein resides in the cellular thylakoid membrane. It carries out the reaction a plastoquinone + NADH + (n+1) H(+)(in) = a plastoquinol + NAD(+) + n H(+)(out). The enzyme catalyses a plastoquinone + NADPH + (n+1) H(+)(in) = a plastoquinol + NADP(+) + n H(+)(out). In terms of biological role, NDH-1 shuttles electrons from an unknown electron donor, via FMN and iron-sulfur (Fe-S) centers, to quinones in the respiratory and/or the photosynthetic chain. The immediate electron acceptor for the enzyme in this species is believed to be plastoquinone. Couples the redox reaction to proton translocation, and thus conserves the redox energy in a proton gradient. Cyanobacterial NDH-1 also plays a role in inorganic carbon-concentration. The protein is NAD(P)H-quinone oxidoreductase subunit L of Trichormus variabilis (strain ATCC 29413 / PCC 7937) (Anabaena variabilis).